The chain runs to 270 residues: NADPH-dependent 7-cyano-7-deazaguanine reductase (270 aa).

Substrate is bound at residue isoleucine 79–serine 81. Serine 81–lysine 82 is an NADPH binding site. Catalysis depends on cysteine 177, which acts as the Thioimide intermediate. The active-site Proton donor is aspartate 184. Substrate is bound at residue histidine 216–glutamate 217. Arginine 245 to glycine 246 contributes to the NADPH binding site.

Belongs to the GTP cyclohydrolase I family. QueF type 2 subfamily. In terms of assembly, homodimer.

The protein resides in the cytoplasm. The enzyme catalyses 7-aminomethyl-7-carbaguanine + 2 NADP(+) = 7-cyano-7-deazaguanine + 2 NADPH + 3 H(+). The protein operates within tRNA modification; tRNA-queuosine biosynthesis. Its function is as follows. Catalyzes the NADPH-dependent reduction of 7-cyano-7-deazaguanine (preQ0) to 7-aminomethyl-7-deazaguanine (preQ1). This chain is NADPH-dependent 7-cyano-7-deazaguanine reductase, found in Acinetobacter baumannii (strain ACICU).